The chain runs to 129 residues: Small ribosomal subunit protein uS11 (129 aa).

The protein belongs to the universal ribosomal protein uS11 family. As to quaternary structure, part of the 30S ribosomal subunit. Interacts with proteins S7 and S18. Binds to IF-3.

In terms of biological role, located on the platform of the 30S subunit, it bridges several disparate RNA helices of the 16S rRNA. Forms part of the Shine-Dalgarno cleft in the 70S ribosome. The sequence is that of Small ribosomal subunit protein uS11 from Yersinia enterocolitica serotype O:8 / biotype 1B (strain NCTC 13174 / 8081).